The chain runs to 236 residues: UPF0502 protein Bpro_3844 (236 aa).

Belongs to the UPF0502 family.

The polypeptide is UPF0502 protein Bpro_3844 (Polaromonas sp. (strain JS666 / ATCC BAA-500)).